The sequence spans 428 residues: MASWDNLGELSNIAQLTGLDAVKLISLIVRAASTARLHKRNCRRFAQHLKLIGGLLEQLRVSELRKYPETREPLEQLEDALRRGYLLVNSCQDRSYLYLLAMGWNIVYQFRKAQSEIDNYLRLVPLITLVDNARIRDRLEYIERDQCEYSFDEEDKKVQDALLNPDPCTNPTIVLKKTLSCSYPNLPFNEALRKESEKLQVELQRSQSNMDLGSCEVIQHLLGVTKTVESTIPEKETNVKAPEKKGSNYSESKGETAKSFDDDDDYPKKQNGDYPKKQKDTCSTQRCSSQVPYGHDLVSSRGSYSDEWHADLLGCCSKPALCLKTLFFPCGTFSRIASIAKDRPMSSGEACNDIMAYSLILSCCCYTCCVRRKLRQKLDIAGGCCDDFLSHLLCCCCALVQEWREVEIRGAYSEKTKVTPPACQYMEH.

Positions 233–280 (PEKETNVKAPEKKGSNYSESKGETAKSFDDDDDYPKKQNGDYPKKQKD) are enriched in basic and acidic residues. The disordered stretch occupies residues 233–290 (PEKETNVKAPEKKGSNYSESKGETAKSFDDDDDYPKKQNGDYPKKQKDTCSTQRCSSQ). Positions 281–290 (TCSTQRCSSQ) are enriched in polar residues. A helical membrane pass occupies residues 354 to 370 (IMAYSLILSCCCYTCCV).

As to expression, expressed in roots, coleoptiles, leaves, stalks, apical meristems, immature ears, embryos, endosperm, pericarp, silks and tassel spikelets. Not detected in pollen.

The protein localises to the membrane. In Zea mays (Maize), this protein is Cell number regulator 13 (CNR13).